A 249-amino-acid polypeptide reads, in one-letter code: BPI fold-containing family A member 2 (249 aa).

The signal sequence occupies residues 1 to 18 (MLQLWKLVLLCGVLTGTS). Residues Asn-124 and Asn-132 are each glycosylated (N-linked (GlcNAc...) asparagine). An intrachain disulfide couples Cys-174 to Cys-217.

It belongs to the BPI/LBP/Plunc superfamily. Plunc family. As to expression, detected in submandibular gland. Secreted into saliva.

It localises to the secreted. Has strong antibacterial activity against P.aeruginosa. The polypeptide is BPI fold-containing family A member 2 (BPIFA2) (Homo sapiens (Human)).